The chain runs to 339 residues: Dihydroorotate dehydrogenase (quinone) (339 aa).

FMN-binding positions include 62 to 66 and T86; that span reads AGMDK. Position 66 (K66) interacts with substrate. Substrate is bound at residue 111–115; sequence NRMGF. Residues N139 and N172 each contribute to the FMN site. N172 provides a ligand contact to substrate. S175 serves as the catalytic Nucleophile. N177 contacts substrate. Residues K217 and T245 each contribute to the FMN site. 246 to 247 contacts substrate; it reads NT. Residues G268, G297, and 318-319 each bind FMN; that span reads YS.

It belongs to the dihydroorotate dehydrogenase family. Type 2 subfamily. Monomer. The cofactor is FMN.

The protein resides in the cell membrane. It catalyses the reaction (S)-dihydroorotate + a quinone = orotate + a quinol. Its pathway is pyrimidine metabolism; UMP biosynthesis via de novo pathway; orotate from (S)-dihydroorotate (quinone route): step 1/1. Catalyzes the conversion of dihydroorotate to orotate with quinone as electron acceptor. This is Dihydroorotate dehydrogenase (quinone) from Shewanella sediminis (strain HAW-EB3).